The chain runs to 597 residues: Nuclear factor erythroid 2-related factor 2 (597 aa).

The DLG motif motif lies at 29 to 31 (DLG). S40 is subject to Phosphoserine; by PKC. The short motif at 79-82 (ETGE) is the ETGE motif element. S207 carries the post-translational modification Phosphoserine. Residues 327–440 (TMEFNDSDSG…APFTKDKHSS (114 aa)) form a disordered region. Polar residues predominate over residues 333–345 (SDSGISLNTSPSR). Residues K454, K464, and K479 are each glycosylated (N-linked (Glc) (glycation) lysine). The bZIP domain maps to 489-552 (LIRDIRRRGK…HLLKRRLSTL (64 aa)). An N-linked (Glc) (glycation) arginine glycan is attached at R491. Positions 491–510 (RDIRRRGKNKVAAQNCRKRK) are basic motif. The segment at 514–521 (IVELEQDL) is leucine-zipper. Residue R561 is glycosylated (N-linked (Glc) (glycation) arginine). Residues 563-597 (EDGKPYSPSEYSLQQTRDGNVFLVPKSKKPDTKKN) are disordered. An N-linked (Glc) (glycation) lysine glycan is attached at K566. The segment covering 571 to 580 (SEYSLQQTRD) has biased composition (polar residues). The mediates interaction with CHD6 and is necessary to activate transcription stretch occupies residues 583-588 (VFLVPK). Residues K588 and K591 each carry the N6-acetyllysine; by CREBBP modification.

This sequence belongs to the bZIP family. CNC subfamily. As to quaternary structure, heterodimer; heterodimerizes with small Maf proteins. Interacts (via the bZIP domain) with MAFG and MAFK; required for binding to antioxidant response elements (AREs) on DNA. Interacts with KEAP1; the interaction is direct and promotes ubiquitination by the BCR(KEAP1) E3 ubiquitin ligase complex. Forms a ternary complex with PGAM5 and KEAP1. Interacts with EEF1D at heat shock promoter elements (HSE). Interacts via its leucine-zipper domain with the coiled-coil domain of PMF1. Interacts with CHD6; involved in activation of the transcription. Interacts with ESRRB; represses NFE2L2 transcriptional activity. Interacts with MOTS-c, a peptide produced by the mitochondrially encoded 12S rRNA MT-RNR1; the interaction occurs in the nucleus following metabolic stress. In terms of processing, ubiquitinated in the cytoplasm by the BCR(KEAP1) E3 ubiquitin ligase complex leading to its degradation. In response to oxidative stress, electrophile metabolites, such as sulforaphane, modify KEAP1, leading to inhibit activity of the BCR(KEAP1) complex, promoting NFE2L2/NRF2 nuclear accumulation and activity. In response to autophagy, the BCR(KEAP1) complex is inactivated. Phosphorylated by EIF2AK3/PERK following unfolded protein response (UPR), promoting dissociation from its cytoplasmic inhibitor KEAP1, followed by its translocation into the nucleus. Phosphorylation of Ser-40 by PKC in response to oxidative stress dissociates NFE2L2 from its cytoplasmic inhibitor KEAP1, promoting its translocation into the nucleus. Post-translationally, acetylation at Lys-588 and Lys-591 increases nuclear localization whereas deacetylation by SIRT1 enhances cytoplasmic presence. In terms of processing, glycation impairs transcription factor activity by preventing heterodimerization with small Maf proteins. Deglycation by FN3K restores activity. In terms of tissue distribution, widely expressed. Highest expression in liver, skeletal muscle, luminal cells of the stomach and intestine, lining of the bronchi and alveoli, and in renal tubules; followed by heart, spleen, testis and brain.

The protein localises to the cytoplasm. It is found in the cytosol. It localises to the nucleus. Transcription factor that plays a key role in the response to oxidative stress: binds to antioxidant response (ARE) elements present in the promoter region of many cytoprotective genes, such as phase 2 detoxifying enzymes, and promotes their expression, thereby neutralizing reactive electrophiles. In normal conditions, ubiquitinated and degraded in the cytoplasm by the BCR(KEAP1) complex. In response to oxidative stress, electrophile metabolites inhibit activity of the BCR(KEAP1) complex, promoting nuclear accumulation of NFE2L2/NRF2, heterodimerization with one of the small Maf proteins and binding to ARE elements of cytoprotective target genes. The NFE2L2/NRF2 pathway is also activated in response to selective autophagy: autophagy promotes interaction between KEAP1 and SQSTM1/p62 and subsequent inactivation of the BCR(KEAP1) complex, leading to NFE2L2/NRF2 nuclear accumulation and expression of cytoprotective genes. The NFE2L2/NRF2 pathway is also activated during the unfolded protein response (UPR), contributing to redox homeostasis and cell survival following endoplasmic reticulum stress. May also be involved in the transcriptional activation of genes of the beta-globin cluster by mediating enhancer activity of hypersensitive site 2 of the beta-globin locus control region. Also plays an important role in the regulation of the innate immune response. It is a critical regulator of the innate immune response and survival during sepsis by maintaining redox homeostasis and restraint of the dysregulation of pro-inflammatory signaling pathways like MyD88-dependent and -independent and TNF-alpha signaling. Suppresses macrophage inflammatory response by blocking pro-inflammatory cytokine transcription and the induction of IL6. Binds to the proximity of pro-inflammatory genes in macrophages and inhibits RNA Pol II recruitment. The inhibition is independent of the Nrf2-binding motif and reactive oxygen species level. Represses antiviral cytosolic DNA sensing by suppressing the expression of the adapter protein STING1 and decreasing responsiveness to STING1 agonists while increasing susceptibility to infection with DNA viruses. The protein is Nuclear factor erythroid 2-related factor 2 of Mus musculus (Mouse).